A 428-amino-acid chain; its full sequence is Adenosylmethionine-8-amino-7-oxononanoate aminotransferase (428 aa).

A substrate-binding site is contributed by Trp-52. Residue 112 to 113 coordinates pyridoxal 5'-phosphate; sequence GS. Tyr-144 lines the substrate pocket. Asp-245 contacts pyridoxal 5'-phosphate. Residues Lys-274 and Gly-307 each contribute to the substrate site. Position 274 is an N6-(pyridoxal phosphate)lysine (Lys-274). Position 308–309 (308–309) interacts with pyridoxal 5'-phosphate; the sequence is PT. Arg-391 serves as a coordination point for substrate.

This sequence belongs to the class-III pyridoxal-phosphate-dependent aminotransferase family. BioA subfamily. In terms of assembly, homodimer. Pyridoxal 5'-phosphate serves as cofactor.

The protein resides in the cytoplasm. It carries out the reaction (8S)-8-amino-7-oxononanoate + S-adenosyl-L-methionine = S-adenosyl-4-methylsulfanyl-2-oxobutanoate + (7R,8S)-7,8-diammoniononanoate. The protein operates within cofactor biosynthesis; biotin biosynthesis; 7,8-diaminononanoate from 8-amino-7-oxononanoate (SAM route): step 1/1. Its function is as follows. Catalyzes the transfer of the alpha-amino group from S-adenosyl-L-methionine (SAM) to 7-keto-8-aminopelargonic acid (KAPA) to form 7,8-diaminopelargonic acid (DAPA). It is the only aminotransferase known to utilize SAM as an amino donor. The sequence is that of Adenosylmethionine-8-amino-7-oxononanoate aminotransferase from Buchnera aphidicola subsp. Acyrthosiphon pisum (strain APS) (Acyrthosiphon pisum symbiotic bacterium).